The following is a 499-amino-acid chain: Low-affinity inorganic phosphate transporter PitA (499 aa).

The Periplasmic segment spans residues 1 to 4 (MLHL). The helical transmembrane segment at 5–25 (FAGLDLHTGLLLLLALAFVLF) threads the bilayer. Residues 26–51 (YEAINGFHDTANAVATVIYTRAMRSQ) are Cytoplasmic-facing. The chain crosses the membrane as a helical span at residues 52–72 (LAVVMAAVFNFLGVLLGGLSV). The Periplasmic portion of the chain corresponds to 73 to 93 (AYAIVHMLPTDLLLNMGSSHG). Residues 94-114 (LAMVFSMLLAAIIWNLGTWYF) form a helical membrane-spanning segment. The Cytoplasmic portion of the chain corresponds to 115–123 (GLPASSSHT). A helical transmembrane segment spans residues 124 to 144 (LIGAIIGIGLTNALMTGTSVV). Topologically, residues 145–154 (DALNIPKVLS) are periplasmic. A helical membrane pass occupies residues 155-175 (IFGSLIVSPIVGLVFAGGLIF). The Cytoplasmic segment spans residues 176–206 (LLRRYWSGTKKRARIHLTPAEREKKDGKKKP). Residues 207–227 (PFWTRIALILSAIGVAFSHGA) form a helical membrane-spanning segment. The Periplasmic segment spans residues 228-232 (NDGQK). Residues 233–253 (GIGLVMLVLIGVAPAGFVVNM) traverse the membrane as a helical segment. The Cytoplasmic portion of the chain corresponds to 254–381 (NATGYEITRT…KSDMLSTIEY (128 aa)). Residues 382–402 (APVWIIMAVALALGIGTMIGW) traverse the membrane as a helical segment. At 403 to 429 (RRVATTIGEKIGKKGMTYAQGMSAQMT) the chain is on the periplasmic side. Residues 430-450 (AAVSIGLASYTGMPVSTTHVL) form a helical membrane-spanning segment. At 451–472 (SSSVAGTMVVDGGGLQRKTVTS) the chain is on the cytoplasmic side. Residues 473-493 (ILMAWVFTLPAAVLLSGGLYW) form a helical membrane-spanning segment. The Periplasmic portion of the chain corresponds to 494 to 499 (LSLQFL).

The protein belongs to the inorganic phosphate transporter (PiT) (TC 2.A.20) family. Pit subfamily.

It is found in the cell inner membrane. It carries out the reaction phosphate(in) + H(+)(in) = phosphate(out) + H(+)(out). Low-affinity inorganic phosphate transporter. In Escherichia coli O157:H7, this protein is Low-affinity inorganic phosphate transporter PitA (pitA).